Here is a 701-residue protein sequence, read N- to C-terminus: MPRKTPIERYRNIGISAHIDAGKTTTTERILFYTGVTHKIGEVHDGAATMDWMEQEQERGITITSAATTAFWKGMAGNYPEHRINIIDTPGHVDFTIEVERSMRVLDGACMVYDSVGGVQPQSETVWRQANKYKVPRIAFVNKMDRVGADFFRVQRQIGDRLKGVAVPIQIPVGAEEHFQGVVDLVKMKAIFWDEENQGIKFEYRDIPPELAATAKEWHDKMVEAAAEANEELLDKYLGGETLTEEEIKHGIRVRTIANEIVPMLCGSAFKNKGVQAMLDAVIDYLPSPLDVPAITGHDEHDNEIERHPNDNDPFSALAFKIMTDPFVGQLIFFRVYSGVVNSGDTVYNAIKEKKERLGRILQMHANERKEIKEVYAGDIAAAVGLKEATTGDTLCDPNHVIILEKMIFPEPVISQAVEPKTKVDQEKMGIALNRLAQEDPSFRVQTDEESGQTIISGMGELHLEILVDRMKREFGVEATVGKPQVAYRETVRNKVEDVEGKFVKQSGGRGQYGHAVITLEPAPQGKGYEFVDAIKGGVIPREYIPAVDKGIQETLKAGVLAGYPVVDVKVTLTFGSYHDVDSNENAFRMAGSMAFKEAMRKARPVLLEPMMAVEVETPEDFMGNVMGDLSSRRGLVQGMEDIAGGGGKLVRAEVPLAEMFGYSTSLRSATQGRATYTMEFKHYAETPNNVAEAVINAKHK.

Residues 8-290 (ERYRNIGISA…AVIDYLPSPL (283 aa)) enclose the tr-type G domain. GTP is bound by residues 17–24 (AHIDAGKT), 88–92 (DTPGH), and 142–145 (NKMD).

This sequence belongs to the TRAFAC class translation factor GTPase superfamily. Classic translation factor GTPase family. EF-G/EF-2 subfamily.

Its subcellular location is the cytoplasm. Its function is as follows. Catalyzes the GTP-dependent ribosomal translocation step during translation elongation. During this step, the ribosome changes from the pre-translocational (PRE) to the post-translocational (POST) state as the newly formed A-site-bound peptidyl-tRNA and P-site-bound deacylated tRNA move to the P and E sites, respectively. Catalyzes the coordinated movement of the two tRNA molecules, the mRNA and conformational changes in the ribosome. This Paraburkholderia xenovorans (strain LB400) protein is Elongation factor G 1.